The primary structure comprises 503 residues: ATP synthase subunit alpha (503 aa).

Position 170–177 (170–177 (GDKQTGKT)) interacts with ATP.

The protein belongs to the ATPase alpha/beta chains family. F-type ATPases have 2 components, CF(1) - the catalytic core - and CF(0) - the membrane proton channel. CF(1) has five subunits: alpha(3), beta(3), gamma(1), delta(1), epsilon(1). CF(0) has three main subunits: a(1), b(2) and c(9-12). The alpha and beta chains form an alternating ring which encloses part of the gamma chain. CF(1) is attached to CF(0) by a central stalk formed by the gamma and epsilon chains, while a peripheral stalk is formed by the delta and b chains.

It localises to the cell inner membrane. It catalyses the reaction ATP + H2O + 4 H(+)(in) = ADP + phosphate + 5 H(+)(out). In terms of biological role, produces ATP from ADP in the presence of a proton gradient across the membrane. The alpha chain is a regulatory subunit. This is ATP synthase subunit alpha from Helicobacter pylori (strain P12).